The primary structure comprises 314 residues: NF-kappa-B inhibitor alpha (314 aa).

Residues 1–41 (MFQPAEPGQEWAMEGPRDALKKERLLDDRHDSGLDSMKDEE) form a disordered region. Basic and acidic residues predominate over residues 15–41 (GPRDALKKERLLDDRHDSGLDSMKDEE). Lys21 participates in a covalent cross-link: Glycyl lysine isopeptide (Lys-Gly) (interchain with G-Cter in SUMO); alternate. Lys21 is covalently cross-linked (Glycyl lysine isopeptide (Lys-Gly) (interchain with G-Cter in ubiquitin); alternate). Lys22 is covalently cross-linked (Glycyl lysine isopeptide (Lys-Gly) (interchain with G-Cter in ubiquitin)). Positions 30-36 (HDSGLDS) match the Destruction motif motif. Ser32 is modified (phosphoserine; by IKKA and IKKB). A Phosphoserine; by IKKA, IKKB, IKKE and TBK1 modification is found at Ser36. Residue Tyr42 is modified to Phosphotyrosine; by Tyr-kinases. Residues 45–54 (MVKELREIRL) carry the Nuclear export signal motif. The short motif at 110-120 (LQQTPLHLAVI) is the Nuclear import signal element. ANK repeat units lie at residues 110 to 139 (LQQT…DPEL), 143 to 172 (RGNT…TQHL), 182 to 211 (NGHT…DVNA), and 216 to 245 (NGRT…DVNR). 2 positions are modified to (3S)-3-hydroxyasparagine; by HIF1AN: Asn210 and Asn244. Phosphoserine; by CK2 occurs at positions 283 and 288. Thr291 is modified (phosphothreonine; by CK2). At Ser293 the chain carries Phosphoserine; by CK2. Position 296 is a phosphothreonine (Thr296).

This sequence belongs to the NF-kappa-B inhibitor family. As to quaternary structure, interacts with RELA; the interaction requires the nuclear import signal. Part of a 70-90 kDa complex at least consisting of CHUK, IKBKB, NFKBIA, RELA, ELP1 and MAP3K14. Interacts with NKIRAS1 and NKIRAS2. Interacts with RWDD3; the interaction enhances sumoylation. Interacts with PRMT2. Interacts with PRKACA in platelets; this interaction is disrupted by thrombin and collagen. Interacts with MEFV. Interacts with DDRGK1; positively regulates NFKBIA phosphorylation and degradation. Interacts with HNRNPA2B1; the interaction may be mediated by the RRM2 domain of HNRNPA2B1, and HNRNPA2B1 may interact simultaneously with FAM76B and either NFKBIA or NFKBIE to form a complex. In terms of processing, phosphorylated at Ser-32 and Ser-36 by IKKA/CHUK and IKKB/IKBKB; disables inhibition of NF-kappa-B DNA-binding activity. Phosphorylation at positions 32 and 36 is prerequisite to recognition by the SCF(FBXW11) and SCF(BTRC) complexes, leading to polyubiquitination and subsequent degradation. Polyubiquitinated at Lys-21 and/or Lys-22 following phosphorylation at Ser-32 and Ser-36. Monoubiquitinated at Lys-21 and/or Lys-22 by UBE2D3. Ubiquitin chain elongation is then performed by CDC34 in cooperation with the SCF(FBXW11) E3 ligase complex, building ubiquitin chains from the UBE2D3-primed NFKBIA-linked ubiquitin. The resulting polyubiquitination leads to protein degradation. Also ubiquitinated by the SCF(BTRC) complex following stimulus-dependent phosphorylation at Ser-32 and Ser-36. Deubiquitinated by USP38, leading to NF-kappa-B inhibition. Post-translationally, sumoylated; sumoylation requires the presence of the nuclear import signal. Sumoylation blocks ubiquitination and proteasome-mediated degradation of the protein thereby increasing the protein stability. In terms of processing, hydroxylated by HIF1AN.

The protein resides in the cytoplasm. The protein localises to the nucleus. Its function is as follows. Inhibits the activity of dimeric NF-kappa-B/REL complexes by trapping REL (RELA/p65 and NFKB1/p50) dimers in the cytoplasm by masking their nuclear localization signals. On cellular stimulation by immune and pro-inflammatory responses, becomes phosphorylated promoting ubiquitination and degradation, enabling the dimeric RELA to translocate to the nucleus and activate transcription. The polypeptide is NF-kappa-B inhibitor alpha (NFKBIA) (Sus scrofa (Pig)).